The following is a 1235-amino-acid chain: ATP-dependent helicase/nuclease subunit A (1235 aa).

Positions 12–482 (TLWTDDQWKA…IDLSQNFRSR (471 aa)) constitute a UvrD-like helicase ATP-binding domain. Position 33–40 (33–40 (AAAGSGKT)) interacts with ATP. In terms of domain architecture, UvrD-like helicase C-terminal spans 509–800 (AAELTLGANF…RMMTIHASKG (292 aa)).

Belongs to the helicase family. AddA subfamily. Heterodimer of AddA and AddB/RexB. Mg(2+) is required as a cofactor.

The enzyme catalyses Couples ATP hydrolysis with the unwinding of duplex DNA by translocating in the 3'-5' direction.. The catalysed reaction is ATP + H2O = ADP + phosphate + H(+). In terms of biological role, the heterodimer acts as both an ATP-dependent DNA helicase and an ATP-dependent, dual-direction single-stranded exonuclease. Recognizes the chi site generating a DNA molecule suitable for the initiation of homologous recombination. The AddA nuclease domain is required for chi fragment generation; this subunit has the helicase and 3' -&gt; 5' nuclease activities. This chain is ATP-dependent helicase/nuclease subunit A, found in Listeria welshimeri serovar 6b (strain ATCC 35897 / DSM 20650 / CCUG 15529 / CIP 8149 / NCTC 11857 / SLCC 5334 / V8).